Consider the following 611-residue polypeptide: Threonine--tRNA ligase (611 aa).

Positions 211 to 509 are catalytic; sequence DHRKLGTELE…LTEHYAGEFP (299 aa). Zn(2+) contacts are provided by Cys310, His361, and His486.

It belongs to the class-II aminoacyl-tRNA synthetase family. In terms of assembly, homodimer. It depends on Zn(2+) as a cofactor.

Its subcellular location is the cytoplasm. The catalysed reaction is tRNA(Thr) + L-threonine + ATP = L-threonyl-tRNA(Thr) + AMP + diphosphate + H(+). Catalyzes the attachment of threonine to tRNA(Thr) in a two-step reaction: L-threonine is first activated by ATP to form Thr-AMP and then transferred to the acceptor end of tRNA(Thr). Also edits incorrectly charged L-seryl-tRNA(Thr). The sequence is that of Threonine--tRNA ligase from Nautilia profundicola (strain ATCC BAA-1463 / DSM 18972 / AmH).